We begin with the raw amino-acid sequence, 494 residues long: Aspartyl/glutamyl-tRNA(Asn/Gln) amidotransferase subunit B (494 aa).

Belongs to the GatB/GatE family. GatB subfamily. In terms of assembly, heterotrimer of A, B and C subunits.

The enzyme catalyses L-glutamyl-tRNA(Gln) + L-glutamine + ATP + H2O = L-glutaminyl-tRNA(Gln) + L-glutamate + ADP + phosphate + H(+). It carries out the reaction L-aspartyl-tRNA(Asn) + L-glutamine + ATP + H2O = L-asparaginyl-tRNA(Asn) + L-glutamate + ADP + phosphate + 2 H(+). In terms of biological role, allows the formation of correctly charged Asn-tRNA(Asn) or Gln-tRNA(Gln) through the transamidation of misacylated Asp-tRNA(Asn) or Glu-tRNA(Gln) in organisms which lack either or both of asparaginyl-tRNA or glutaminyl-tRNA synthetases. The reaction takes place in the presence of glutamine and ATP through an activated phospho-Asp-tRNA(Asn) or phospho-Glu-tRNA(Gln). This Rhodopseudomonas palustris (strain HaA2) protein is Aspartyl/glutamyl-tRNA(Asn/Gln) amidotransferase subunit B.